Consider the following 1021-residue polypeptide: Probable calcium-transporting ATPase 6, plasma membrane-type (1021 aa).

Residues 1–155 (MEGGRSWSIE…RSFWMFVWDA (155 aa)) lie on the Cytoplasmic side of the membrane. 2 helical membrane-spanning segments follow: residues 156–176 (LHDL…VVGL) and 181–201 (WPMG…VVLV). The Cytoplasmic segment spans residues 202 to 241 (TATSDYQQARKFMELDREKQKIYIRVTRDKKTKEVLVHDL). A run of 2 helical transmembrane segments spans residues 242 to 262 (VVGD…GLFI) and 338 to 358 (VATI…LVLL). Residues 359–384 (ARFLADKGMHVGLLNWSANDALTIVN) are Cytoplasmic-facing. Residues 385 to 405 (YFAIAVTIIVVAVPEGLPLAV) traverse the membrane as a helical segment. The active-site 4-aspartylphosphate intermediate is Asp-441. Residues Asp-740 and Asp-744 each contribute to the Mg(2+) site. The chain crosses the membrane as a helical span at residues 807-827 (IVALIVNFVSACIIGSAPLTA). Residues 828-829 (VQ) lie on the Cytoplasmic side of the membrane. A run of 2 helical transmembrane segments spans residues 830–850 (LLWV…TEPP) and 879–899 (GLYQ…LLSI). At 900–942 (EGPQSDKTINTLIFNSFVFCQVFNEINCREMEKINVLQGIFRN) the chain is on the cytoplasmic side. 2 helical membrane passes run 943 to 963 (WIFV…VEFL) and 974 to 994 (GELW…SVIL). The Cytoplasmic segment spans residues 995–1021 (KCIPVEFNKTNTKPHGYELIPEGPEIL).

Belongs to the cation transport ATPase (P-type) (TC 3.A.3) family. Type IIB subfamily.

The protein resides in the membrane. The catalysed reaction is Ca(2+)(in) + ATP + H2O = Ca(2+)(out) + ADP + phosphate + H(+). Its activity is regulated as follows. Activated by calmodulin. This magnesium-dependent enzyme catalyzes the hydrolysis of ATP coupled with the translocation of calcium from the cytosol out of the cell, into the endoplasmic reticulum, or into organelles. This Oryza sativa subsp. japonica (Rice) protein is Probable calcium-transporting ATPase 6, plasma membrane-type.